The sequence spans 84 residues: Exodeoxyribonuclease 7 small subunit (84 aa).

It belongs to the XseB family. As to quaternary structure, heterooligomer composed of large and small subunits.

Its subcellular location is the cytoplasm. It catalyses the reaction Exonucleolytic cleavage in either 5'- to 3'- or 3'- to 5'-direction to yield nucleoside 5'-phosphates.. In terms of biological role, bidirectionally degrades single-stranded DNA into large acid-insoluble oligonucleotides, which are then degraded further into small acid-soluble oligonucleotides. This is Exodeoxyribonuclease 7 small subunit from Haemophilus influenzae (strain 86-028NP).